Here is a 510-residue protein sequence, read N- to C-terminus: 2,3-bisphosphoglycerate-independent phosphoglycerate mutase (510 aa).

The Mn(2+) site is built by aspartate 13 and serine 63. Serine 63 (phosphoserine intermediate) is an active-site residue. Substrate is bound by residues histidine 124, 154–155 (RD), arginine 186, arginine 192, 262–265 (RADR), and lysine 334. Mn(2+) is bound by residues aspartate 401, histidine 405, aspartate 442, histidine 443, and histidine 461.

Belongs to the BPG-independent phosphoglycerate mutase family. In terms of assembly, monomer. The cofactor is Mn(2+).

It catalyses the reaction (2R)-2-phosphoglycerate = (2R)-3-phosphoglycerate. It participates in carbohydrate degradation; glycolysis; pyruvate from D-glyceraldehyde 3-phosphate: step 3/5. In terms of biological role, catalyzes the interconversion of 2-phosphoglycerate and 3-phosphoglycerate. The protein is 2,3-bisphosphoglycerate-independent phosphoglycerate mutase of Aliivibrio fischeri (strain ATCC 700601 / ES114) (Vibrio fischeri).